A 344-amino-acid chain; its full sequence is Heat-inducible transcription repressor HrcA (344 aa).

This sequence belongs to the HrcA family.

Negative regulator of class I heat shock genes (grpE-dnaK-dnaJ and groELS operons). Prevents heat-shock induction of these operons. The chain is Heat-inducible transcription repressor HrcA from Geobacillus sp. (strain WCH70).